The primary structure comprises 614 residues: Phosphomethylpyrimidine synthase (614 aa).

Positions 1–16 (MNAQLSALQQQAQQLS) are enriched in low complexity. The disordered stretch occupies residues 1 to 36 (MNAQLSALQQQAQQLSESVTRPIPGSRKIHVPGSRP). Substrate contacts are provided by residues Asn-230, Met-259, Tyr-288, His-324, 344–346 (SRG), 385–388 (DGLR), and Glu-424. His-428 is a binding site for Zn(2+). Residue Tyr-451 coordinates substrate. His-492 contributes to the Zn(2+) binding site. Positions 572, 575, and 580 each coordinate [4Fe-4S] cluster.

It belongs to the ThiC family. Homodimer. The cofactor is [4Fe-4S] cluster.

It catalyses the reaction 5-amino-1-(5-phospho-beta-D-ribosyl)imidazole + S-adenosyl-L-methionine = 4-amino-2-methyl-5-(phosphooxymethyl)pyrimidine + CO + 5'-deoxyadenosine + formate + L-methionine + 3 H(+). The protein operates within cofactor biosynthesis; thiamine diphosphate biosynthesis. Catalyzes the synthesis of the hydroxymethylpyrimidine phosphate (HMP-P) moiety of thiamine from aminoimidazole ribotide (AIR) in a radical S-adenosyl-L-methionine (SAM)-dependent reaction. This chain is Phosphomethylpyrimidine synthase, found in Stenotrophomonas maltophilia (strain R551-3).